We begin with the raw amino-acid sequence, 370 residues long: 3-isopropylmalate dehydrogenase 1 (370 aa).

Substrate is bound by residues Arg-98, Arg-108, Arg-136, and Asp-227. Asp-227, Asp-251, and Asp-255 together coordinate Mg(2+). Position 289 to 301 (289 to 301 (GSAPDIAGQGIAN)) interacts with NAD(+).

Belongs to the isocitrate and isopropylmalate dehydrogenases family. LeuB type 1 subfamily. In terms of assembly, homodimer. The cofactor is Mg(2+). It depends on Mn(2+) as a cofactor.

The protein localises to the cytoplasm. The enzyme catalyses (2R,3S)-3-isopropylmalate + NAD(+) = 4-methyl-2-oxopentanoate + CO2 + NADH. The protein operates within amino-acid biosynthesis; L-leucine biosynthesis; L-leucine from 3-methyl-2-oxobutanoate: step 3/4. Catalyzes the oxidation of 3-carboxy-2-hydroxy-4-methylpentanoate (3-isopropylmalate) to 3-carboxy-4-methyl-2-oxopentanoate. The product decarboxylates to 4-methyl-2 oxopentanoate. The chain is 3-isopropylmalate dehydrogenase 1 from Bordetella bronchiseptica (strain ATCC BAA-588 / NCTC 13252 / RB50) (Alcaligenes bronchisepticus).